The sequence spans 311 residues: tRNA-cytidine(32) 2-sulfurtransferase (311 aa).

A PP-loop motif motif is present at residues 47 to 52 (SGGKDS). The [4Fe-4S] cluster site is built by C122, C125, and C213.

Belongs to the TtcA family. As to quaternary structure, homodimer. The cofactor is Mg(2+). Requires [4Fe-4S] cluster as cofactor.

Its subcellular location is the cytoplasm. It carries out the reaction cytidine(32) in tRNA + S-sulfanyl-L-cysteinyl-[cysteine desulfurase] + AH2 + ATP = 2-thiocytidine(32) in tRNA + L-cysteinyl-[cysteine desulfurase] + A + AMP + diphosphate + H(+). It participates in tRNA modification. In terms of biological role, catalyzes the ATP-dependent 2-thiolation of cytidine in position 32 of tRNA, to form 2-thiocytidine (s(2)C32). The sulfur atoms are provided by the cysteine/cysteine desulfurase (IscS) system. This is tRNA-cytidine(32) 2-sulfurtransferase from Citrobacter koseri (strain ATCC BAA-895 / CDC 4225-83 / SGSC4696).